The primary structure comprises 906 residues: Protein translocase subunit SecA (906 aa).

Residues Gln-86, 104-108 (GEGKT), and Asp-511 each bind ATP. Basic and acidic residues-rich tracts occupy residues 853-865 (HESV…RHDE) and 877-888 (VRREGPKVKRND). The interval 853 to 906 (HESVIDNNQRHDEDEQEEAPKVQQVRREGPKVKRNDPCPCGSGKKYKQCHSKVE) is disordered. Residues Cys-890, Cys-892, Cys-901, and His-902 each coordinate Zn(2+). Basic residues predominate over residues 896-906 (KKYKQCHSKVE).

This sequence belongs to the SecA family. As to quaternary structure, monomer and homodimer. Part of the essential Sec protein translocation apparatus which comprises SecA, SecYEG and auxiliary proteins SecDF-YajC and YidC. The cofactor is Zn(2+).

It localises to the cell inner membrane. The protein localises to the cytoplasm. The enzyme catalyses ATP + H2O + cellular proteinSide 1 = ADP + phosphate + cellular proteinSide 2.. Functionally, part of the Sec protein translocase complex. Interacts with the SecYEG preprotein conducting channel. Has a central role in coupling the hydrolysis of ATP to the transfer of proteins into and across the cell membrane, serving both as a receptor for the preprotein-SecB complex and as an ATP-driven molecular motor driving the stepwise translocation of polypeptide chains across the membrane. The protein is Protein translocase subunit SecA of Francisella tularensis subsp. mediasiatica (strain FSC147).